Here is a 487-residue protein sequence, read N- to C-terminus: Histamine H1 receptor (487 aa).

Over methionine 1–proline 29 the chain is Extracellular. N-linked (GlcNAc...) asparagine glycans are attached at residues asparagine 5 and asparagine 18. A helical transmembrane segment spans residues leucine 30–tyrosine 50. Over alanine 51–leucine 64 the chain is Cytoplasmic. A helical transmembrane segment spans residues tyrosine 65–leucine 89. Over methionine 90–arginine 97 the chain is Extracellular. A helical transmembrane segment spans residues proline 98 to isoleucine 123. A disulfide bond links cysteine 100 and cysteine 180. Histamine is bound by residues aspartate 107 and threonine 112. Residues aspartate 107–threonine 112 form an important for agonist binding region. Residues aspartate 124–alanine 144 lie on the Cytoplasmic side of the membrane. Residues threonine 140 and threonine 142 each carry the phosphothreonine modification. Residues serine 145 to glycine 164 traverse the membrane as a helical segment. Residues tryptophan 165–threonine 188 are Extracellular-facing. A helical membrane pass occupies residues tryptophan 189–alanine 211. Asparagine 198 is a histamine binding site. The Cytoplasmic portion of the chain corresponds to lysine 212 to glutamine 416. The residue at position 230 (serine 230) is a Phosphoserine. Residues lysine 238–lysine 261 show a composition bias toward basic and acidic residues. The segment at lysine 238–glutamate 292 is disordered. Threonine 279 is subject to Phosphothreonine. A phosphoserine mark is found at serine 344 and serine 347. Residues glutamate 345–arginine 377 form a disordered region. The span at glycine 353–alanine 370 shows a compositional bias: polar residues. Phosphoserine is present on residues serine 380, serine 396, and serine 398. Residues leucine 417–phenylalanine 440 form a helical membrane-spanning segment. An important for agonist binding region spans residues phenylalanine 424 to tryptophan 428. Residue tyrosine 431 coordinates histamine. Residues cysteine 441 and cysteine 444 are joined by a disulfide bond. The Extracellular segment spans residues cysteine 441–asparagine 446. The helical transmembrane segment at glutamate 447–proline 469 threads the bilayer. The Cytoplasmic segment spans residues leucine 470–serine 487.

This sequence belongs to the G-protein coupled receptor 1 family. In terms of processing, phosphorylation at sites in the second and third cytoplasmic loops independently contribute to agonist-induced receptor down-regulation.

It localises to the cell membrane. Functionally, G-protein-coupled receptor for histamine, a biogenic amine that functions as an immune modulator and a neurotransmitter. Through the H1 receptor, histamine mediates the contraction of smooth muscles and increases capillary permeability due to contraction of terminal venules. Also mediates neurotransmission in the central nervous system and thereby regulates circadian rhythms, emotional and locomotor activities as well as cognitive functions. In Gorilla gorilla gorilla (Western lowland gorilla), this protein is Histamine H1 receptor.